A 238-amino-acid chain; its full sequence is 4-hydroxy-tetrahydrodipicolinate reductase (238 aa).

12–17 (GASGRM) is an NAD(+) binding site. NADP(+) is bound at residue arginine 40. Residues 93-95 (GTT) and 117-120 (ASNF) each bind NAD(+). Histidine 149 serves as the catalytic Proton donor/acceptor. Histidine 150 serves as a coordination point for (S)-2,3,4,5-tetrahydrodipicolinate. Lysine 153 (proton donor) is an active-site residue. (S)-2,3,4,5-tetrahydrodipicolinate is bound at residue 159–160 (GT).

It belongs to the DapB family.

The protein resides in the cytoplasm. It catalyses the reaction (S)-2,3,4,5-tetrahydrodipicolinate + NAD(+) + H2O = (2S,4S)-4-hydroxy-2,3,4,5-tetrahydrodipicolinate + NADH + H(+). It carries out the reaction (S)-2,3,4,5-tetrahydrodipicolinate + NADP(+) + H2O = (2S,4S)-4-hydroxy-2,3,4,5-tetrahydrodipicolinate + NADPH + H(+). It participates in amino-acid biosynthesis; L-lysine biosynthesis via DAP pathway; (S)-tetrahydrodipicolinate from L-aspartate: step 4/4. Functionally, catalyzes the conversion of 4-hydroxy-tetrahydrodipicolinate (HTPA) to tetrahydrodipicolinate. In Xanthomonas euvesicatoria pv. vesicatoria (strain 85-10) (Xanthomonas campestris pv. vesicatoria), this protein is 4-hydroxy-tetrahydrodipicolinate reductase.